Reading from the N-terminus, the 601-residue chain is Glutamine--fructose-6-phosphate aminotransferase [isomerizing] (601 aa).

C2 functions as the Nucleophile; for GATase activity in the catalytic mechanism. The Glutamine amidotransferase type-2 domain occupies 2–218 (CGIVGYIGYD…DHEIVIVKKD (217 aa)). 2 SIS domains span residues 284 to 423 (IIND…EHGR) and 453 to 591 (IATD…VDKP). K596 acts as the For Fru-6P isomerization activity in catalysis.

Homodimer.

It is found in the cytoplasm. It carries out the reaction D-fructose 6-phosphate + L-glutamine = D-glucosamine 6-phosphate + L-glutamate. Its function is as follows. Catalyzes the first step in hexosamine metabolism, converting fructose-6P into glucosamine-6P using glutamine as a nitrogen source. In Staphylococcus aureus (strain MRSA252), this protein is Glutamine--fructose-6-phosphate aminotransferase [isomerizing].